The chain runs to 364 residues: Long-wave-sensitive opsin 1 (364 aa).

Residues 1–58 (MTQRWGPQRLAGGQPQAGLEESTQASIFTYTNSNATRDPFEGPNYHIAPRWVYHLTSA) are Extracellular-facing. S22 carries an O-linked (GlcNAc) serine glycan. N34 carries an N-linked (GlcNAc...) asparagine glycan. A helical transmembrane segment spans residues 59-79 (WMIFVVIASVFTNGLVLVATM). Residues 80 to 90 (RFKKLRHPLNW) are Cytoplasmic-facing. The chain crosses the membrane as a helical span at residues 91-111 (ILVNLAIADLAETIIASTISV). At 112 to 126 (VNQIYGYFVLGHPLC) the chain is on the extracellular side. The cysteines at positions 126 and 203 are disulfide-linked. Residues 127–147 (VVEGYTVSLCGITGLWSLAII) traverse the membrane as a helical segment. Residues 148 to 168 (SWERWLVVCKPFGNVRFDAKL) are Cytoplasmic-facing. The helical transmembrane segment at 169–189 (AIAGIAFSWIWAAVWTAPPIF) threads the bilayer. Residues 190-219 (GWSRYWPHGLKTSCGPDVFSGSSYPGVQSY) lie on the Extracellular side of the membrane. A helical membrane pass occupies residues 220–240 (MIVLMTTCCIIPLSVIILCYL). At 241-269 (QVWLAIRAVAKQQKESESTQKAEKEVTRM) the chain is on the cytoplasmic side. The chain crosses the membrane as a helical span at residues 270–290 (VVVMVLAYCLCWGPYTFFACF). The Extracellular portion of the chain corresponds to 291–301 (AAAHPGYAFHP). A helical transmembrane segment spans residues 302 to 324 (LVAALPAYFAKSATIYNPIIYVF). An N6-(retinylidene)lysine modification is found at K312. Residues 325–364 (MNRQFRNCILQLFGKKVDDSSELSSASRTEASSVSSVSPA) are Cytoplasmic-facing.

This sequence belongs to the G-protein coupled receptor 1 family. Opsin subfamily. Phosphorylated on some or all of the serine and threonine residues present in the C-terminal region. The three color pigments are found in the cone photoreceptor cells.

The protein localises to the membrane. Visual pigments are the light-absorbing molecules that mediate vision. They consist of an apoprotein, opsin, covalently linked to cis-retinal. The polypeptide is Long-wave-sensitive opsin 1 (OPN1LW) (Canis lupus familiaris (Dog)).